A 366-amino-acid chain; its full sequence is Ribosomal RNA large subunit methyltransferase M (366 aa).

S-adenosyl-L-methionine is bound by residues Ser-188, 221–224 (CPGG), Asp-240, Asp-260, and Asp-277. The active-site Proton acceptor is the Lys-306.

This sequence belongs to the class I-like SAM-binding methyltransferase superfamily. RNA methyltransferase RlmE family. RlmM subfamily. As to quaternary structure, monomer.

Its subcellular location is the cytoplasm. The catalysed reaction is cytidine(2498) in 23S rRNA + S-adenosyl-L-methionine = 2'-O-methylcytidine(2498) in 23S rRNA + S-adenosyl-L-homocysteine + H(+). Catalyzes the 2'-O-methylation at nucleotide C2498 in 23S rRNA. In Shigella sonnei (strain Ss046), this protein is Ribosomal RNA large subunit methyltransferase M.